The primary structure comprises 434 residues: Chaperone SurA (434 aa).

The N-terminal stretch at 1-22 is a signal peptide; the sequence is MKPSKHLIFALFALAISQPTMA. 2 consecutive PpiC domains span residues 173–274 and 283–383; these read DVEY…KIMD and IEEV…QLEE.

It is found in the periplasm. The enzyme catalyses [protein]-peptidylproline (omega=180) = [protein]-peptidylproline (omega=0). Functionally, chaperone involved in the correct folding and assembly of outer membrane proteins. Recognizes specific patterns of aromatic residues and the orientation of their side chains, which are found more frequently in integral outer membrane proteins. May act in both early periplasmic and late outer membrane-associated steps of protein maturation. The protein is Chaperone SurA of Shewanella sp. (strain MR-4).